A 615-amino-acid chain; its full sequence is UvrABC system protein C (615 aa).

The 80-residue stretch at 12 to 91 (EKPGVYIMKD…IKKYKPKYNV (80 aa)) folds into the GIY-YIG domain. One can recognise a UVR domain in the interval 203-238 (DWLIQKLKEDMKKAAEELRFEEAARIRDQIFAIERT).

The protein belongs to the UvrC family. Interacts with UvrB in an incision complex.

The protein localises to the cytoplasm. In terms of biological role, the UvrABC repair system catalyzes the recognition and processing of DNA lesions. UvrC both incises the 5' and 3' sides of the lesion. The N-terminal half is responsible for the 3' incision and the C-terminal half is responsible for the 5' incision. The chain is UvrABC system protein C from Thermoanaerobacter sp. (strain X514).